Here is a 357-residue protein sequence, read N- to C-terminus: uncharacterized protein (357 aa).

An HEAT repeat occupies 173-211 (VLPILEKLMQDESLYVRKSVANNLNDISKTHPHLLRKVA).

This is an uncharacterized protein from Bacillus subtilis (strain 168).